Consider the following 72-residue polypeptide: Translation initiation factor IF-1 (72 aa).

An S1-like domain is found at 1–72 (MTKEDSFEMH…SKGRIIFRSR (72 aa)).

It belongs to the IF-1 family. Component of the 30S ribosomal translation pre-initiation complex which assembles on the 30S ribosome in the order IF-2 and IF-3, IF-1 and N-formylmethionyl-tRNA(fMet); mRNA recruitment can occur at any time during PIC assembly.

Its subcellular location is the cytoplasm. Its function is as follows. One of the essential components for the initiation of protein synthesis. Stabilizes the binding of IF-2 and IF-3 on the 30S subunit to which N-formylmethionyl-tRNA(fMet) subsequently binds. Helps modulate mRNA selection, yielding the 30S pre-initiation complex (PIC). Upon addition of the 50S ribosomal subunit IF-1, IF-2 and IF-3 are released leaving the mature 70S translation initiation complex. In Blochmanniella pennsylvanica (strain BPEN), this protein is Translation initiation factor IF-1.